A 140-amino-acid polypeptide reads, in one-letter code: Natriuretic peptides A (140 aa).

The signal sequence occupies residues 1–24; the sequence is MDTRGSFSCGFLLLLLIQLQPSRA. A propeptide spanning residues 25–111 is cleaved from the precursor; that stretch reads NPIYNLSPAK…KRLRGVQMPR (87 aa). Residues 55–94 form a disordered region; it reads ALESNPDLQEPQTQEEIPPELTDDSDEQKAEPKLASNTPL. The segment covering 71 to 80 has biased composition (acidic residues); sequence IPPELTDDSD. An intrachain disulfide couples C118 to C134.

This sequence belongs to the natriuretic peptide family. Post-translationally, cleaved by CORIN upon secretion to produce the functional hormone.

Its subcellular location is the secreted. Functionally, hormone playing a key role in cardiovascular homeostasis through regulation of natriuresis, diuresis, and vasodilation. Specifically binds and stimulates the cGMP production of the NPR1 receptor. Binds the clearance receptor NPR3. This chain is Natriuretic peptides A (NPPA), found in Gallus gallus (Chicken).